The following is a 419-amino-acid chain: 3-isopropylmalate dehydratase large subunit (419 aa).

Residues Cys-300, Cys-360, and Cys-363 each contribute to the [4Fe-4S] cluster site.

It belongs to the aconitase/IPM isomerase family. LeuC type 2 subfamily. In terms of assembly, heterodimer of LeuC and LeuD. [4Fe-4S] cluster serves as cofactor.

The catalysed reaction is (2R,3S)-3-isopropylmalate = (2S)-2-isopropylmalate. The protein operates within amino-acid biosynthesis; L-leucine biosynthesis; L-leucine from 3-methyl-2-oxobutanoate: step 2/4. Its function is as follows. Catalyzes the isomerization between 2-isopropylmalate and 3-isopropylmalate, via the formation of 2-isopropylmaleate. This Nitratidesulfovibrio vulgaris (strain ATCC 29579 / DSM 644 / CCUG 34227 / NCIMB 8303 / VKM B-1760 / Hildenborough) (Desulfovibrio vulgaris) protein is 3-isopropylmalate dehydratase large subunit.